Reading from the N-terminus, the 156-residue chain is Small ribosomal subunit protein uS7 (156 aa).

This sequence belongs to the universal ribosomal protein uS7 family. As to quaternary structure, part of the 30S ribosomal subunit. Contacts proteins S9 and S11.

Its function is as follows. One of the primary rRNA binding proteins, it binds directly to 16S rRNA where it nucleates assembly of the head domain of the 30S subunit. Is located at the subunit interface close to the decoding center, probably blocks exit of the E-site tRNA. This chain is Small ribosomal subunit protein uS7, found in Bartonella tribocorum (strain CIP 105476 / IBS 506).